Here is a 732-residue protein sequence, read N- to C-terminus: Elongation factor 2 (732 aa).

The tr-type G domain occupies 19-230 (ERIRNMGIAA…VSFKDIVELT (212 aa)). GTP is bound by residues 28 to 35 (AHIDHGKT), 94 to 98 (DTPGH), and 148 to 151 (NKVD). His-597 bears the Diphthamide mark.

This sequence belongs to the TRAFAC class translation factor GTPase superfamily. Classic translation factor GTPase family. EF-G/EF-2 subfamily.

The protein resides in the cytoplasm. Its function is as follows. Catalyzes the GTP-dependent ribosomal translocation step during translation elongation. During this step, the ribosome changes from the pre-translocational (PRE) to the post-translocational (POST) state as the newly formed A-site-bound peptidyl-tRNA and P-site-bound deacylated tRNA move to the P and E sites, respectively. Catalyzes the coordinated movement of the two tRNA molecules, the mRNA and conformational changes in the ribosome. In Thermococcus gammatolerans (strain DSM 15229 / JCM 11827 / EJ3), this protein is Elongation factor 2.